Reading from the N-terminus, the 827-residue chain is MTKLKDQTRAILLATLMVTSVFAGAIAFTGSAAAERGNLDADSESFNKTIQSGDRVFLGEEISTDAGLGASNPLLTGTAGNSEGVSLDLSSPIPQTTENQPLGTYDVDGSGSATTPNVTLLAPRITDSEILTSSGGDVTGSAISSSDAGNLYVNADYNYESAEKVEVTVEDPSGTDITNEVLSGTDTFVDDGSIGSTSSTGGGVGIDMSDQDAGEYTIILEGAEDLDFGDATETMTLTISSQDEIGIELDSESVTQGTDVQYTVTNGIDGNEHVVAMDLSDLQNDATTEQAKEVFRNIGDTSEVGIANSSATNTSGSSTGPTVETADIAYAVVEIDGASAVGGIETQYLDDSEVDLEVYDAGVSATAAVGQDATNDITLTIEEGGTTLSSPTGQYVVGSEVDINGTATSSDSVAIYVRDDGDWQLLEIGGDNEISVDSDDTFEEEDIALSGLSGDGSSILSLTGTYRIGVIDASDADVGGDGSVDDSLTTSEFTSGVSSSNSIRVTDQALTGQFTTINGQVAPVETGTVDINGTASGANSVLVIFVDERGNVNYQEVSVDSDGTYDEDDITVGLTQGRVTAHILSVGRDSAIGDGSLPSGPSNGATLNDLTGYLDTLDQNNNNGEQINELIASETVDETASDDLIVTETFRLAESSTSIDSIYPDAAEAAGINPVATGETMVIAGSTNLKPDDNTISIEVTNEDGTSVALEDTDEWNNDGQWMVEIDTTDFETGTFTVEADDGDNTDTVNVEVVSEREDTTTSSDNATDTTTTTDGPTETTTTAEPTETTEEPTEETTTSSNTPGFGIAVALVALVGAALLALRREN.

Residues Met1–Ala34 form the signal peptide. An N-linked (Glc...) asparagine glycan is attached at Asn47. Polar residues predominate over residues Pro73–Leu102. The tract at residues Pro73 to Gly111 is disordered. Residues Asn117, Asn308, Asn313, Asn532, and Asn766 are each glycosylated (N-linked (Glc...) asparagine). Residues Ser755 to Pro804 form a disordered region. The span at Thr761–Thr787 shows a compositional bias: low complexity. Positions Pro804–Phe806 match the PGF sorting signal motif. Residues Pro804 to Leu823 form a helical membrane-spanning segment.

It belongs to the halobacterial S-layer protein family. O-glycosylated on 4 to 6 threonine residues; glycans consist of Glc-Gal disaccharides. Post-translationally, the N-terminus is not blocked. In terms of processing, cleaved by the archaeosortase ArtA at the C-terminus, with removal of a short hydrophobic segment. Lipidation: Following protein translocation across the membrane, the protein is modified by a derivative of mevalonic acid. Lipid modification is ArtA-dependent and requires the conserved C-terminal PGF motif. Post-translationally, asn-47 and Asn-117 are glycosylated by a pentasaccharide comprising a hexose, 2 hexuronic acids, a methyl ester of a hexuronic acid and mannose. The pentasaccharide is produced in 2 steps: first, a tetrasaccharide is built on dolichol-P and then transferred to the S-layer glycoprotein. Then, the mannose fifth sugar is attached to a distinct molecule of dolichol-P and is transferred to the protein already carrying the tetrasaccharide. The pentasaccharide on Asn-47 was initially thought to contain mannose, galactose, glucose and idose with a relative ratio of 1/3/3/0.2. However, it was later shown that it is not the case. Under low-salt conditions (1.75 M instead of 3.4 M), a tetrasaccharide consisting of a sulfated hexose, 2 hexoses and rhamnose is attached to Asn-532.

Its subcellular location is the secreted. It is found in the cell wall. The protein resides in the S-layer. The protein localises to the cell membrane. S-layer protein. The S-layer is a paracrystalline mono-layered assembly of proteins which coat the surface of the cell. This chain is Cell surface glycoprotein (csg), found in Haloferax volcanii (strain ATCC 29605 / DSM 3757 / JCM 8879 / NBRC 14742 / NCIMB 2012 / VKM B-1768 / DS2) (Halobacterium volcanii).